We begin with the raw amino-acid sequence, 46 residues long: KECMADETVCYIHNHNNCCGSCLCLNGPYARPWEMLVGNCKCGPKE.

4 cysteine pairs are disulfide-bonded: Cys3–Cys19, Cys10–Cys22, Cys18–Cys42, and Cys24–Cys40. A keys region for toxin activity region spans residues 31 to 33 (RPW).

It belongs to the neurotoxin 16 (SFI) family. As to expression, expressed by the venom gland.

The protein localises to the secreted. Insecticidal toxin. Causes flaccid paralysis followed by death when injected into Heliothis virescens larvae. Does not induce any toxic effects when injected intravenously into adult mice at a dose of 1.25 mg/kg body weight. This Segestria florentina (Tube-web spider) protein is Mu-segestritoxin-Sf1b.